Consider the following 85-residue polypeptide: MGGISIWQLLIIALIVVLLFGTKKLRSLGGDLGGAVKGFKNAMSSDEDKKALEDAEAAKSVQTAQTAQPTQQATEKKPESNKEQA.

A helical membrane pass occupies residues Met-1–Gly-21. The interval Met-43–Ala-85 is disordered. The segment covering Asp-46–Ala-57 has biased composition (basic and acidic residues). Residues Ala-58–Ala-73 show a composition bias toward low complexity. The segment covering Thr-74–Ala-85 has biased composition (basic and acidic residues).

This sequence belongs to the TatA/E family. In terms of assembly, the Tat system comprises two distinct complexes: a TatABC complex, containing multiple copies of TatA, TatB and TatC subunits, and a separate TatA complex, containing only TatA subunits. Substrates initially bind to the TatABC complex, which probably triggers association of the separate TatA complex to form the active translocon.

Its subcellular location is the cell inner membrane. In terms of biological role, part of the twin-arginine translocation (Tat) system that transports large folded proteins containing a characteristic twin-arginine motif in their signal peptide across membranes. TatA could form the protein-conducting channel of the Tat system. This is Sec-independent protein translocase protein TatA from Shewanella sp. (strain ANA-3).